We begin with the raw amino-acid sequence, 40 residues long: Chitin-binding protein 4 (40 aa).

N-glycosylated.

Functionally, chitin-binding protein. Has antifungal activity against C.krusei, C.albicans, C.tropicalis and C.parapsilosis. Has antinociceptive and anti-inflammatory activity in mice. This chain is Chitin-binding protein 4, found in Moringa oleifera (Horseradish tree).